The primary structure comprises 353 residues: Thiamine-phosphate synthase (353 aa).

Residues 1–128 (MKSMPVAPIA…AASAAAIRYG (128 aa)) form a unknown region. Positions 129 to 353 (LYDLEVTVLQ…TSLQLLEALR (225 aa)) are thiamine-phosphate synthase. 4-amino-2-methyl-5-(diphosphooxymethyl)pyrimidine is bound by residues 185 to 189 (QYRNK) and Asn217. Mg(2+) contacts are provided by Asp218 and Asp237. Ser256 serves as a coordination point for 4-amino-2-methyl-5-(diphosphooxymethyl)pyrimidine. 282-284 (TAT) provides a ligand contact to 2-[(2R,5Z)-2-carboxy-4-methylthiazol-5(2H)-ylidene]ethyl phosphate. Residue Lys285 coordinates 4-amino-2-methyl-5-(diphosphooxymethyl)pyrimidine. Gly312 lines the 2-[(2R,5Z)-2-carboxy-4-methylthiazol-5(2H)-ylidene]ethyl phosphate pocket.

Belongs to the thiamine-phosphate synthase family. The cofactor is Mg(2+).

The enzyme catalyses 2-[(2R,5Z)-2-carboxy-4-methylthiazol-5(2H)-ylidene]ethyl phosphate + 4-amino-2-methyl-5-(diphosphooxymethyl)pyrimidine + 2 H(+) = thiamine phosphate + CO2 + diphosphate. It carries out the reaction 2-(2-carboxy-4-methylthiazol-5-yl)ethyl phosphate + 4-amino-2-methyl-5-(diphosphooxymethyl)pyrimidine + 2 H(+) = thiamine phosphate + CO2 + diphosphate. It catalyses the reaction 4-methyl-5-(2-phosphooxyethyl)-thiazole + 4-amino-2-methyl-5-(diphosphooxymethyl)pyrimidine + H(+) = thiamine phosphate + diphosphate. Its pathway is cofactor biosynthesis; thiamine diphosphate biosynthesis; thiamine phosphate from 4-amino-2-methyl-5-diphosphomethylpyrimidine and 4-methyl-5-(2-phosphoethyl)-thiazole: step 1/1. Condenses 4-methyl-5-(beta-hydroxyethyl)thiazole monophosphate (THZ-P) and 2-methyl-4-amino-5-hydroxymethyl pyrimidine pyrophosphate (HMP-PP) to form thiamine monophosphate (TMP). In Prochlorococcus marinus (strain MIT 9303), this protein is Thiamine-phosphate synthase.